The chain runs to 471 residues: Mitochondrial distribution and morphology protein 10 (471 aa).

Residues 429 to 455 (PSSFSSPSRAANSTPAGGGQSVGGGIS) are disordered. Over residues 444–455 (AGGGQSVGGGIS) the composition is skewed to gly residues.

This sequence belongs to the MDM10 family. Component of the ER-mitochondria encounter structure (ERMES) or MDM complex, composed of mmm1, mdm10, mdm12 and mdm34. Associates with the mitochondrial outer membrane sorting assembly machinery SAM(core) complex.

Its subcellular location is the mitochondrion outer membrane. In terms of biological role, component of the ERMES/MDM complex, which serves as a molecular tether to connect the endoplasmic reticulum and mitochondria. Components of this complex are involved in the control of mitochondrial shape and protein biogenesis and may function in phospholipid exchange. mdm10 is involved in the late assembly steps of the general translocase of the mitochondrial outer membrane (TOM complex). Functions in the tom40-specific route of the assembly of outer membrane beta-barrel proteins, including the association of tom40 with the receptor tom22 and small TOM proteins. Can associate with the SAM(core) complex as well as the mdm12-mmm1 complex, both involved in late steps of the major beta-barrel assembly pathway, that is responsible for biogenesis of all outer membrane beta-barrel proteins. May act as a switch that shuttles between both complexes and channels precursor proteins into the tom40-specific pathway. Plays a role in mitochondrial morphology and in the inheritance of mitochondria. In Aspergillus fumigatus (strain ATCC MYA-4609 / CBS 101355 / FGSC A1100 / Af293) (Neosartorya fumigata), this protein is Mitochondrial distribution and morphology protein 10 (mdmB).